A 498-amino-acid polypeptide reads, in one-letter code: Interferon regulatory factor 5 (498 aa).

Threonine 10 carries the phosphothreonine modification. A Nuclear localization signal motif is present at residues 12–18 (PRRVRLK). The IRF tryptophan pentad repeat DNA-binding region spans 14 to 122 (RVRLKPWLVA…QPYKIYEVCS (109 aa)). Residues 121-207 (CSNGPAPTDS…SPLAPPPGNP (87 aa)) are disordered. A Nuclear export signal motif is present at residues 150–160 (LQRMLPSLSLT). At serine 158 the chain carries Phosphoserine; by TBK1. Positions 168–206 (TLQPPTLRPPTLQPPTLQPPVVLGPPAPDPSPLAPPPGN) are enriched in pro residues. Serine 293 carries the phosphoserine; by TBK1 modification. Phosphoserine is present on serine 301. Glycyl lysine isopeptide (Lys-Gly) (interchain with G-Cter in ubiquitin) cross-links involve residues lysine 411 and lysine 412. 4 positions are modified to phosphoserine: serine 431, serine 435, serine 437, and serine 440. At serine 446 the chain carries Phosphoserine; by IKKB. The interval 478–498 (PPGAGLGVGQGPWPMHPAGMQ) is disordered.

The protein belongs to the IRF family. In terms of assembly, homodimer, when phosphorylated. Interacts with TASL (via pLxIS motif); interaction takes place downstream of TLR7, TLR8 or TLR9, leading to its activation. Interacts with MYD88 and TRAF6. Post-translationally, phosphorylation of serine and threonine residues by IKBKB in a C-terminal autoinhibitory region, stimulates dimerization, transport into the nucleus, assembly with the coactivator CBP/EP300 and initiation of transcription. 'Lys-63'-linked polyubiquitination by TRAF6 is required for activation.

The protein localises to the cytoplasm. Its subcellular location is the nucleus. Maintained as a monomer in an autoinhibited state. Phosphorylation and activation follow the following steps: innate adapter protein TASL recruits IRF5, thereby licensing IRF5 for phosphorylation by IKBKB. Phosphorylated IRF5 dissociates from the adapter proteins, dimerizes, and then enters the nucleus to induce IFNs. With respect to regulation, (Microbial infection) Activated upon coronavirus SARS-CoV-2 infection. Its function is as follows. Transcription factor that plays a critical role in innate immunity by activating expression of type I interferon (IFN) IFNA and INFB and inflammatory cytokines downstream of endolysosomal toll-like receptors TLR7, TLR8 and TLR9. Regulates the transcription of type I IFN genes (IFN-alpha and IFN-beta) and IFN-stimulated genes (ISG) by binding to an interferon-stimulated response element (ISRE) in their promoters. Can efficiently activate both the IFN-beta (IFNB) and the IFN-alpha (IFNA) genes and mediate their induction downstream of the TLR-activated, MyD88-dependent pathway. Key transcription factor regulating the IFN response during SARS-CoV-2 infection. This Homo sapiens (Human) protein is Interferon regulatory factor 5.